Here is a 354-residue protein sequence, read N- to C-terminus: MKIAVLPGDGIGPEVVREALKVLEVVEKKTGKTFEKVFGHIGGDAIDRFGEPLPEETKKICLEADAIFLGSVGGPKWDDLPPEKRPEIGGLLALRKMLNLYANIRPIKVYRSLVHVSPLKEKVIGSGVDLVTVRELSYGVYYGQPRGLDEEKGFDTMIYDRKTVERIARTAFEIAKNRRKKVTSVDKANVLYSSMLWRKVVNEVAREYPDVELTHIYVDNAAMQLILKPSQFDVILTTNMFGDILSDESAALPGSLGLLPSASFGDKNLYEPAGGSAPDIAGKNIANPIAQILSLAMMLEHSFGMVEEARKIERAVELVIEEGYRTRDIAEDPEKAVSTSQMGDLICKKLEEIW.

Position 74–87 (74–87 (GPKWDDLPPEKRPE)) interacts with NAD(+). Substrate-binding residues include arginine 95, arginine 105, arginine 134, and aspartate 219. Mg(2+)-binding residues include aspartate 219, aspartate 243, and aspartate 247. Residue 275–287 (GSAPDIAGKNIAN) participates in NAD(+) binding.

Belongs to the isocitrate and isopropylmalate dehydrogenases family. LeuB type 1 subfamily. In terms of assembly, homodimer. It depends on Mg(2+) as a cofactor. Mn(2+) serves as cofactor.

It is found in the cytoplasm. It catalyses the reaction (2R,3S)-3-isopropylmalate + NAD(+) = 4-methyl-2-oxopentanoate + CO2 + NADH. Its pathway is amino-acid biosynthesis; L-leucine biosynthesis; L-leucine from 3-methyl-2-oxobutanoate: step 3/4. Functionally, catalyzes the oxidation of 3-carboxy-2-hydroxy-4-methylpentanoate (3-isopropylmalate) to 3-carboxy-4-methyl-2-oxopentanoate. The product decarboxylates to 4-methyl-2 oxopentanoate. The protein is 3-isopropylmalate dehydrogenase (leuB) of Thermotoga maritima (strain ATCC 43589 / DSM 3109 / JCM 10099 / NBRC 100826 / MSB8).